Reading from the N-terminus, the 39-residue chain is Large ribosomal subunit protein bL36 (39 aa).

This sequence belongs to the bacterial ribosomal protein bL36 family.

The polypeptide is Large ribosomal subunit protein bL36 (Pediococcus pentosaceus (strain ATCC 25745 / CCUG 21536 / LMG 10740 / 183-1w)).